The primary structure comprises 327 residues: Aspartate--ammonia ligase (327 aa).

This sequence belongs to the class-II aminoacyl-tRNA synthetase family. AsnA subfamily.

The protein resides in the cytoplasm. The enzyme catalyses L-aspartate + NH4(+) + ATP = L-asparagine + AMP + diphosphate + H(+). It participates in amino-acid biosynthesis; L-asparagine biosynthesis; L-asparagine from L-aspartate (ammonia route): step 1/1. This is Aspartate--ammonia ligase from Bacillus cereus (strain ATCC 10987 / NRS 248).